The primary structure comprises 261 residues: MTHQTHAYHMVNPSPWPLTGALSALLMTSGLIMWFHFNSMTLLMLGLTTNMLTMYQWWRDIIRESTFQGHHTSAVQKGLRYGMILFIISEVLFFTGFFWAFYHSSLAPTPELGGCWPPTGIHPLNPLEVPLLNTSVLLASGVSITWAHHSLMEGNRNHMLQALFITIALGVYFTLLQASEYYEAPFTISDGVYGSTFFVATGFHGLHVIIGSTFLIVCFFRQLKFHFTSTHHFGFEAAAWYWHFVDVVWLFLYVSIYWWGS.

The Mitochondrial matrix segment spans residues 1 to 15; sequence MTHQTHAYHMVNPSP. The helical transmembrane segment at 16-34 threads the bilayer; sequence WPLTGALSALLMTSGLIMW. At 35–40 the chain is on the mitochondrial intermembrane side; the sequence is FHFNSM. The helical transmembrane segment at 41 to 66 threads the bilayer; sequence TLLMLGLTTNMLTMYQWWRDIIREST. At 67-72 the chain is on the mitochondrial matrix side; sequence FQGHHT. A helical transmembrane segment spans residues 73-105; that stretch reads SAVQKGLRYGMILFIISEVLFFTGFFWAFYHSS. Residues 106–128 lie on the Mitochondrial intermembrane side of the membrane; sequence LAPTPELGGCWPPTGIHPLNPLE. Residues 129 to 152 form a helical membrane-spanning segment; that stretch reads VPLLNTSVLLASGVSITWAHHSLM. The Mitochondrial matrix segment spans residues 153 to 155; it reads EGN. A helical membrane pass occupies residues 156–183; that stretch reads RNHMLQALFITIALGVYFTLLQASEYYE. Residues 184 to 190 lie on the Mitochondrial intermembrane side of the membrane; the sequence is APFTISD. The chain crosses the membrane as a helical span at residues 191–223; sequence GVYGSTFFVATGFHGLHVIIGSTFLIVCFFRQL. Residues 224–232 are Mitochondrial matrix-facing; sequence KFHFTSTHH. Residues 233-256 form a helical membrane-spanning segment; that stretch reads FGFEAAAWYWHFVDVVWLFLYVSI. The Mitochondrial intermembrane portion of the chain corresponds to 257–261; the sequence is YWWGS.

It belongs to the cytochrome c oxidase subunit 3 family. As to quaternary structure, component of the cytochrome c oxidase (complex IV, CIV), a multisubunit enzyme composed of 14 subunits. The complex is composed of a catalytic core of 3 subunits MT-CO1, MT-CO2 and MT-CO3, encoded in the mitochondrial DNA, and 11 supernumerary subunits COX4I, COX5A, COX5B, COX6A, COX6B, COX6C, COX7A, COX7B, COX7C, COX8 and NDUFA4, which are encoded in the nuclear genome. The complex exists as a monomer or a dimer and forms supercomplexes (SCs) in the inner mitochondrial membrane with NADH-ubiquinone oxidoreductase (complex I, CI) and ubiquinol-cytochrome c oxidoreductase (cytochrome b-c1 complex, complex III, CIII), resulting in different assemblies (supercomplex SCI(1)III(2)IV(1) and megacomplex MCI(2)III(2)IV(2)).

The protein localises to the mitochondrion inner membrane. The catalysed reaction is 4 Fe(II)-[cytochrome c] + O2 + 8 H(+)(in) = 4 Fe(III)-[cytochrome c] + 2 H2O + 4 H(+)(out). Functionally, component of the cytochrome c oxidase, the last enzyme in the mitochondrial electron transport chain which drives oxidative phosphorylation. The respiratory chain contains 3 multisubunit complexes succinate dehydrogenase (complex II, CII), ubiquinol-cytochrome c oxidoreductase (cytochrome b-c1 complex, complex III, CIII) and cytochrome c oxidase (complex IV, CIV), that cooperate to transfer electrons derived from NADH and succinate to molecular oxygen, creating an electrochemical gradient over the inner membrane that drives transmembrane transport and the ATP synthase. Cytochrome c oxidase is the component of the respiratory chain that catalyzes the reduction of oxygen to water. Electrons originating from reduced cytochrome c in the intermembrane space (IMS) are transferred via the dinuclear copper A center (CU(A)) of subunit 2 and heme A of subunit 1 to the active site in subunit 1, a binuclear center (BNC) formed by heme A3 and copper B (CU(B)). The BNC reduces molecular oxygen to 2 water molecules using 4 electrons from cytochrome c in the IMS and 4 protons from the mitochondrial matrix. The sequence is that of Cytochrome c oxidase subunit 3 (MT-CO3) from Damaliscus lunatus (Tsessebe).